The primary structure comprises 881 residues: Translation initiation factor IF-2 (881 aa).

2 disordered regions span residues 53–92 (RSHG…SKTT) and 163–292 (AEAE…FERP). Residues 81–92 (EVTVNSGRSKTT) show a composition bias toward polar residues. The span at 172-186 (EAAAAAKAAEALAAA) shows a compositional bias: low complexity. Residues 219 to 236 (RNDDRNNRSAPRNERGPG) are compositionally biased toward basic and acidic residues. Positions 254 to 263 (GNSNNSNTRG) are enriched in low complexity. Residues 380-549 (QRPPVVTIMG…SIQAELLELK (170 aa)) form the tr-type G domain. The segment at 389 to 396 (GHVDHGKT) is G1. GTP is bound at residue 389-396 (GHVDHGKT). The interval 414 to 418 (GITQH) is G2. The G3 stretch occupies residues 435–438 (DTPG). Residues 435–439 (DTPGH) and 489–492 (NKID) each bind GTP. The G4 stretch occupies residues 489 to 492 (NKID). The segment at 525-527 (SAK) is G5.

It belongs to the TRAFAC class translation factor GTPase superfamily. Classic translation factor GTPase family. IF-2 subfamily.

The protein localises to the cytoplasm. Functionally, one of the essential components for the initiation of protein synthesis. Protects formylmethionyl-tRNA from spontaneous hydrolysis and promotes its binding to the 30S ribosomal subunits. Also involved in the hydrolysis of GTP during the formation of the 70S ribosomal complex. This chain is Translation initiation factor IF-2, found in Stenotrophomonas maltophilia (strain K279a).